A 358-amino-acid polypeptide reads, in one-letter code: 3-dehydroquinate synthase (358 aa).

NAD(+) contacts are provided by residues 105–109 (GVVGD), 129–130 (TT), Lys-142, Lys-151, and 169–172 (TLKT). Residues Glu-184, His-245, and His-262 each contribute to the Zn(2+) site.

The protein belongs to the sugar phosphate cyclases superfamily. Dehydroquinate synthase family. It depends on NAD(+) as a cofactor. Co(2+) is required as a cofactor. Zn(2+) serves as cofactor.

Its subcellular location is the cytoplasm. It catalyses the reaction 7-phospho-2-dehydro-3-deoxy-D-arabino-heptonate = 3-dehydroquinate + phosphate. The protein operates within metabolic intermediate biosynthesis; chorismate biosynthesis; chorismate from D-erythrose 4-phosphate and phosphoenolpyruvate: step 2/7. In terms of biological role, catalyzes the conversion of 3-deoxy-D-arabino-heptulosonate 7-phosphate (DAHP) to dehydroquinate (DHQ). The chain is 3-dehydroquinate synthase from Enterococcus faecalis (strain ATCC 700802 / V583).